The primary structure comprises 20 residues: T cell receptor alpha joining 42 (20 aa).

The segment at 1–20 (YGGSQGNLIFGKGTKLSVKP) is disordered.

In terms of assembly, alpha-beta TR is a heterodimer composed of an alpha and beta chain; disulfide-linked. The alpha-beta TR is associated with the transmembrane signaling CD3 coreceptor proteins to form the TR-CD3 (TcR or TCR). The assembly of alpha-beta TR heterodimers with CD3 occurs in the endoplasmic reticulum where a single alpha-beta TR heterodimer associates with one CD3D-CD3E heterodimer, one CD3G-CD3E heterodimer and one CD247 homodimer forming a stable octameric structure. CD3D-CD3E and CD3G-CD3E heterodimers preferentially associate with TR alpha and TR beta chains, respectively. The association of the CD247 homodimer is the last step of TcR assembly in the endoplasmic reticulum and is required for transport to the cell surface.

The protein resides in the cell membrane. In terms of biological role, j region of the variable domain of T cell receptor (TR) alpha chain that participates in the antigen recognition. Alpha-beta T cell receptors are antigen specific receptors which are essential to the immune response and are present on the cell surface of T lymphocytes. Recognize peptide-major histocompatibility (MH) (pMH) complexes that are displayed by antigen presenting cells (APC), a prerequisite for efficient T cell adaptive immunity against pathogens. Binding of alpha-beta TR to pMH complex initiates TR-CD3 clustering on the cell surface and intracellular activation of LCK that phosphorylates the ITAM motifs of CD3G, CD3D, CD3E and CD247 enabling the recruitment of ZAP70. In turn, ZAP70 phosphorylates LAT, which recruits numerous signaling molecules to form the LAT signalosome. The LAT signalosome propagates signal branching to three major signaling pathways, the calcium, the mitogen-activated protein kinase (MAPK) kinase and the nuclear factor NF-kappa-B (NF-kB) pathways, leading to the mobilization of transcription factors that are critical for gene expression and essential for T cell growth and differentiation. The T cell repertoire is generated in the thymus, by V-(D)-J rearrangement. This repertoire is then shaped by intrathymic selection events to generate a peripheral T cell pool of self-MH restricted, non-autoaggressive T cells. Post-thymic interaction of alpha-beta TR with the pMH complexes shapes TR structural and functional avidity. This Homo sapiens (Human) protein is T cell receptor alpha joining 42.